The chain runs to 694 residues: Polyphosphate kinase (694 aa).

N45 provides a ligand contact to ATP. The Mg(2+) site is built by R367 and R397. H427 functions as the Phosphohistidine intermediate in the catalytic mechanism. Residues Y460, R553, and H580 each contribute to the ATP site.

It belongs to the polyphosphate kinase 1 (PPK1) family. Requires Mg(2+) as cofactor. Post-translationally, an intermediate of this reaction is the autophosphorylated ppk in which a phosphate is covalently linked to a histidine residue through a N-P bond.

The enzyme catalyses [phosphate](n) + ATP = [phosphate](n+1) + ADP. Its function is as follows. Catalyzes the reversible transfer of the terminal phosphate of ATP to form a long-chain polyphosphate (polyP). This Campylobacter jejuni subsp. jejuni serotype O:6 (strain 81116 / NCTC 11828) protein is Polyphosphate kinase.